Here is a 290-residue protein sequence, read N- to C-terminus: F-box protein PP2-A13 (290 aa).

The F-box domain maps to arginine 21 to serine 67.

As to quaternary structure, part of a SCF (ASK-cullin-F-box) protein ligase complex. Interacts with SKP1A/ASK1, SKP1B/ASK2, ASK5, ASK11 and ASK13.

It localises to the nucleus. It participates in protein modification; protein ubiquitination. Functionally, component of SCF(ASK-cullin-F-box) E3 ubiquitin ligase complexes, which may mediate the ubiquitination and subsequent proteasomal degradation of target proteins. The protein is F-box protein PP2-A13 (PP2A13) of Arabidopsis thaliana (Mouse-ear cress).